Reading from the N-terminus, the 309-residue chain is Tagatose-6-phosphate kinase (309 aa).

The protein belongs to the carbohydrate kinase PfkB family. LacC subfamily.

It catalyses the reaction D-tagatofuranose 6-phosphate + ATP = D-tagatofuranose 1,6-bisphosphate + ADP + H(+). The protein operates within carbohydrate metabolism; D-tagatose 6-phosphate degradation; D-glyceraldehyde 3-phosphate and glycerone phosphate from D-tagatose 6-phosphate: step 1/2. This Streptococcus pyogenes serotype M12 (strain MGAS2096) protein is Tagatose-6-phosphate kinase.